A 607-amino-acid chain; its full sequence is Glutamine--fructose-6-phosphate aminotransferase [isomerizing] (607 aa).

Catalysis depends on Cys-2, which acts as the Nucleophile; for GATase activity. In terms of domain architecture, Glutamine amidotransferase type-2 spans 2–217 (CGIIGIIGND…DGDWAVLTRN (216 aa)). 2 SIS domains span residues 283–422 (IGID…ARGA) and 455–597 (VCHD…VDQP). Lys-602 functions as the For Fru-6P isomerization activity in the catalytic mechanism.

Homodimer.

Its subcellular location is the cytoplasm. It catalyses the reaction D-fructose 6-phosphate + L-glutamine = D-glucosamine 6-phosphate + L-glutamate. In terms of biological role, catalyzes the first step in hexosamine metabolism, converting fructose-6P into glucosamine-6P using glutamine as a nitrogen source. The chain is Glutamine--fructose-6-phosphate aminotransferase [isomerizing] from Brucella melitensis biotype 1 (strain ATCC 23456 / CCUG 17765 / NCTC 10094 / 16M).